A 26-amino-acid polypeptide reads, in one-letter code: Probable early E4 17 kDa protein (26 aa).

The chain is Probable early E4 17 kDa protein from Homo sapiens (Human).